The sequence spans 174 residues: Acetolactate synthase small subunit (174 aa).

The 75-residue stretch at 4–78 (TLSVLVQDEA…NILNVQDVTN (75 aa)) folds into the ACT domain.

It belongs to the acetolactate synthase small subunit family. Dimer of large and small chains.

The protein resides in the plastid. Its subcellular location is the chloroplast. It carries out the reaction 2 pyruvate + H(+) = (2S)-2-acetolactate + CO2. It participates in amino-acid biosynthesis; L-isoleucine biosynthesis; L-isoleucine from 2-oxobutanoate: step 1/4. The protein operates within amino-acid biosynthesis; L-valine biosynthesis; L-valine from pyruvate: step 1/4. The chain is Acetolactate synthase small subunit (ilvH) from Pyropia yezoensis (Susabi-nori).